We begin with the raw amino-acid sequence, 561 residues long: Dihydroxy-acid dehydratase 2 (561 aa).

Cys53 lines the [2Fe-2S] cluster pocket. Asp85 lines the Mg(2+) pocket. A [2Fe-2S] cluster-binding site is contributed by Cys126. Mg(2+)-binding residues include Asp127 and Lys128. The residue at position 128 (Lys128) is an N6-carboxylysine. Cys195 is a binding site for [2Fe-2S] cluster. Glu446 is a binding site for Mg(2+). Ser472 serves as the catalytic Proton acceptor.

It belongs to the IlvD/Edd family. As to quaternary structure, homodimer. [2Fe-2S] cluster serves as cofactor. Requires Mg(2+) as cofactor.

It catalyses the reaction (2R)-2,3-dihydroxy-3-methylbutanoate = 3-methyl-2-oxobutanoate + H2O. It carries out the reaction (2R,3R)-2,3-dihydroxy-3-methylpentanoate = (S)-3-methyl-2-oxopentanoate + H2O. It participates in amino-acid biosynthesis; L-isoleucine biosynthesis; L-isoleucine from 2-oxobutanoate: step 3/4. Its pathway is amino-acid biosynthesis; L-valine biosynthesis; L-valine from pyruvate: step 3/4. Its function is as follows. Functions in the biosynthesis of branched-chain amino acids. Catalyzes the dehydration of (2R,3R)-2,3-dihydroxy-3-methylpentanoate (2,3-dihydroxy-3-methylvalerate) into 2-oxo-3-methylpentanoate (2-oxo-3-methylvalerate) and of (2R)-2,3-dihydroxy-3-methylbutanoate (2,3-dihydroxyisovalerate) into 2-oxo-3-methylbutanoate (2-oxoisovalerate), the penultimate precursor to L-isoleucine and L-valine, respectively. The polypeptide is Dihydroxy-acid dehydratase 2 (Acinetobacter baylyi (strain ATCC 33305 / BD413 / ADP1)).